The following is a 250-amino-acid chain: Ribosome-inactivating protein luffin-B (250 aa).

The active site involves Glu-160.

The protein belongs to the ribosome-inactivating protein family. Type 1 RIP subfamily.

It carries out the reaction Endohydrolysis of the N-glycosidic bond at one specific adenosine on the 28S rRNA.. In Luffa aegyptiaca (Sponge gourd), this protein is Ribosome-inactivating protein luffin-B.